We begin with the raw amino-acid sequence, 345 residues long: Ananain (345 aa).

A signal peptide spans 1 to 24 (MTSKVQLVFLFLFLCVMWASPSAA). Residues 25-122 (SCDEPSDPMM…VSFDDVDISS (98 aa)) constitute a propeptide, activation peptide. Disulfide bonds link C144-C184, C178-C217, and C273-C325. C147 is an active-site residue. Residue C147 coordinates E64. Catalysis depends on residues H279 and N300.

Stem (at protein level).

The catalysed reaction is Hydrolysis of proteins with broad specificity for peptide bonds. Best reported small molecule substrate Bz-Phe-Val-Arg-|-NHMec, but broader specificity than fruit bromelain.. With respect to regulation, strongly inhibited by chicken egg-white cystatin. Inhibited by iodoacetamide and the active-site-directed inhibitor E64 (L-trans-epoxysuccinyl-leucylamide-(4-guanido)-butane). In terms of biological role, cysteine protease. Displays a high level of diversity in substrate specificity at the P1-P1' cleavage site. A hydrophilic P1 residue is preferred, with Gln or Arg strongly preferred. Favors an Ile/Leu residue at the P2 position of substrates, with an overall higher preference for Leu. The optimal tripeptide for cleavage is Pro-Leu-Gln, with cleavage occurring after the Gln residue. Another optimal tripeptide is Val-Leu-Arg, which may imply that a hydrophobic residue at the P3 position of substrates is preferred. This Ananas comosus (Pineapple) protein is Ananain.